The sequence spans 292 residues: MPELPEVETVRRGLEQKLNNFIIKKVEVCRDSTVAYPSNKEEFIKGLKNSLIYKWDRRGKYLIAQLKEVQNENTEFPLENSQNNGFLVVHLRMTGYFKFIENSTHPCKHTRIRFFDKNNNELRYVDVRSFGQMWWINKDLSINKVIKGLGSLGPEPFSKDFNANYLKEAISKRTKSIKAILLDQTIVAGIGNIYADESLYSAGISPFREARTIKKNELIKLKKSIVIVLKKSIGSGGTTFSDFRDLEGENGNFGLQTNVYRRTGRECRKCGNLIERQKITGRSTHWCPNCQK.

P2 serves as the catalytic Schiff-base intermediate with DNA. The active-site Proton donor is E3. Residue K60 is the Proton donor; for beta-elimination activity of the active site. DNA is bound by residues H109, R128, and R173. Residues 258–292 form an FPG-type zinc finger; it reads NVYRRTGRECRKCGNLIERQKITGRSTHWCPNCQK. The active-site Proton donor; for delta-elimination activity is the R282.

Belongs to the FPG family. As to quaternary structure, monomer. It depends on Zn(2+) as a cofactor.

It carries out the reaction Hydrolysis of DNA containing ring-opened 7-methylguanine residues, releasing 2,6-diamino-4-hydroxy-5-(N-methyl)formamidopyrimidine.. The catalysed reaction is 2'-deoxyribonucleotide-(2'-deoxyribose 5'-phosphate)-2'-deoxyribonucleotide-DNA = a 3'-end 2'-deoxyribonucleotide-(2,3-dehydro-2,3-deoxyribose 5'-phosphate)-DNA + a 5'-end 5'-phospho-2'-deoxyribonucleoside-DNA + H(+). Functionally, involved in base excision repair of DNA damaged by oxidation or by mutagenic agents. Acts as a DNA glycosylase that recognizes and removes damaged bases. Has a preference for oxidized purines, such as 7,8-dihydro-8-oxoguanine (8-oxoG). Has AP (apurinic/apyrimidinic) lyase activity and introduces nicks in the DNA strand. Cleaves the DNA backbone by beta-delta elimination to generate a single-strand break at the site of the removed base with both 3'- and 5'-phosphates. This Prochlorococcus marinus (strain MIT 9301) protein is Formamidopyrimidine-DNA glycosylase.